The primary structure comprises 276 residues: DNA repair protein RecO (276 aa).

This sequence belongs to the RecO family.

Involved in DNA repair and RecF pathway recombination. The chain is DNA repair protein RecO from Mycobacterium sp. (strain JLS).